A 508-amino-acid chain; its full sequence is Lysine--tRNA ligase (508 aa).

Mg(2+)-binding residues include Glu-418 and Glu-425.

Belongs to the class-II aminoacyl-tRNA synthetase family. As to quaternary structure, homodimer. Requires Mg(2+) as cofactor.

The protein resides in the cytoplasm. The catalysed reaction is tRNA(Lys) + L-lysine + ATP = L-lysyl-tRNA(Lys) + AMP + diphosphate. In Burkholderia thailandensis (strain ATCC 700388 / DSM 13276 / CCUG 48851 / CIP 106301 / E264), this protein is Lysine--tRNA ligase.